Consider the following 390-residue polypeptide: GTPase Obg (390 aa).

Residues methionine 1–leucine 159 form the Obg domain. In terms of domain architecture, OBG-type G spans alanine 160–aspartate 333. Residues glycine 166–serine 173, phenylalanine 191–isoleucine 195, aspartate 213–glycine 216, asparagine 283–aspartate 286, and alanine 314–valine 316 contribute to the GTP site. Positions 173 and 193 each coordinate Mg(2+).

The protein belongs to the TRAFAC class OBG-HflX-like GTPase superfamily. OBG GTPase family. Monomer. It depends on Mg(2+) as a cofactor.

The protein resides in the cytoplasm. Functionally, an essential GTPase which binds GTP, GDP and possibly (p)ppGpp with moderate affinity, with high nucleotide exchange rates and a fairly low GTP hydrolysis rate. Plays a role in control of the cell cycle, stress response, ribosome biogenesis and in those bacteria that undergo differentiation, in morphogenesis control. This is GTPase Obg from Aliivibrio fischeri (strain MJ11) (Vibrio fischeri).